We begin with the raw amino-acid sequence, 120 residues long: Small ribosomal subunit protein uS12 (120 aa).

At Asp88 the chain carries 3-methylthioaspartic acid.

This sequence belongs to the universal ribosomal protein uS12 family. In terms of assembly, part of the 30S ribosomal subunit. Contacts proteins S8 and S17. May interact with IF1 in the 30S initiation complex.

Its function is as follows. With S4 and S5 plays an important role in translational accuracy. In terms of biological role, interacts with and stabilizes bases of the 16S rRNA that are involved in tRNA selection in the A site and with the mRNA backbone. Located at the interface of the 30S and 50S subunits, it traverses the body of the 30S subunit contacting proteins on the other side and probably holding the rRNA structure together. The combined cluster of proteins S8, S12 and S17 appears to hold together the shoulder and platform of the 30S subunit. The polypeptide is Small ribosomal subunit protein uS12 (Carsonella ruddii (strain PV)).